The chain runs to 373 residues: Sensor protein DegM (373 aa).

4 consecutive transmembrane segments (helical) span residues 27 to 47 (ILLA…AIAV), 57 to 77 (LFLL…LCVN), 91 to 111 (YASL…LYLI), and 122 to 142 (VAGW…TYLF). The Histidine kinase domain maps to 170 to 370 (SIAHEVRNPL…KVVLSLPIEK (201 aa)). Position 173 is a phosphohistidine; by autocatalysis (His173).

It is found in the cell membrane. The catalysed reaction is ATP + protein L-histidine = ADP + protein N-phospho-L-histidine.. Functionally, involved in a sensory transduction pathway that enhances the production of minor proteases. This is Sensor protein DegM (degM) from Bacillus sp. (strain B21-2).